The sequence spans 353 residues: FNMESDSFEDLWKGEDFSNYSYSSDLPPSLPDVAPCRPESLEINKYFVVIIYALVFLLSLLGNSLVMLVILYSRVGRSVTDVYLLNLALADLLFALTLPIWAASKVNGWIFGTFLCKVVSLLKEVNFYSGILLLACISVDRYLAIVHATRTLTQKRYLVKFICLSIWGLSLLLALPVLLFRRTVYSSNVSPACYEDMGNNTANWRMLLRILPQSFGFIVPLLIMLFCYGFTLRTLFKAHMGQKHRAMRVIFAVVLIFLLCWLPYSLVLLADTLMRTQVIQETCERRNHIDRALDATEILGILHSCLNPLIYAFIGQKFRHGLLKILAIHGLISKDSLPKDSRPSFVGSSSGHT.

At 1–45 (FNMESDSFEDLWKGEDFSNYSYSSDLPPSLPDVAPCRPESLEINK) the chain is on the extracellular side. Asn-19 carries N-linked (GlcNAc...) asparagine glycosylation. Residues 46–72 (YFVVIIYALVFLLSLLGNSLVMLVILY) form a helical membrane-spanning segment. Residues 73 to 81 (SRVGRSVTD) lie on the Cytoplasmic side of the membrane. A helical transmembrane segment spans residues 82–102 (VYLLNLALADLLFALTLPIWA). Residues 103-117 (ASKVNGWIFGTFLCK) are Extracellular-facing. Cys-116 and Cys-193 are disulfide-bonded. Residues 118 to 139 (VVSLLKEVNFYSGILLLACISV) traverse the membrane as a helical segment. The Cytoplasmic segment spans residues 140 to 160 (DRYLAIVHATRTLTQKRYLVK). The chain crosses the membrane as a helical span at residues 161–180 (FICLSIWGLSLLLALPVLLF). Over 181-205 (RRTVYSSNVSPACYEDMGNNTANWR) the chain is Extracellular. A helical membrane pass occupies residues 206-228 (MLLRILPQSFGFIVPLLIMLFCY). The Cytoplasmic segment spans residues 229-248 (GFTLRTLFKAHMGQKHRAMR). A helical transmembrane segment spans residues 249-270 (VIFAVVLIFLLCWLPYSLVLLA). Residues 271–291 (DTLMRTQVIQETCERRNHIDR) lie on the Extracellular side of the membrane. Residues 292–312 (ALDATEILGILHSCLNPLIYA) form a helical membrane-spanning segment. Residues 313–353 (FIGQKFRHGLLKILAIHGLISKDSLPKDSRPSFVGSSSGHT) are Cytoplasmic-facing.

It belongs to the G-protein coupled receptor 1 family. As to quaternary structure, interacts with IL8. Interacts with GNAI2. Post-translationally, phosphorylated upon ligand binding; which is required for desensitization.

The protein localises to the cell membrane. Functionally, receptor for interleukin-8 which is a powerful neutrophil chemotactic factor. Binding of IL-8 to the receptor causes activation of neutrophils. This response is mediated via a G-protein that activates a phosphatidylinositol-calcium second messenger system. Binds to IL-8 with high affinity. Also binds with high affinity to CXCL3, GRO/MGSA and NAP-2. This chain is C-X-C chemokine receptor type 2 (CXCR2), found in Macaca mulatta (Rhesus macaque).